We begin with the raw amino-acid sequence, 104 residues long: Large ribosomal subunit protein uL23 (104 aa).

The protein belongs to the universal ribosomal protein uL23 family. In terms of assembly, part of the 50S ribosomal subunit. Contacts protein L29, and trigger factor when it is bound to the ribosome.

In terms of biological role, one of the early assembly proteins it binds 23S rRNA. One of the proteins that surrounds the polypeptide exit tunnel on the outside of the ribosome. Forms the main docking site for trigger factor binding to the ribosome. The polypeptide is Large ribosomal subunit protein uL23 (Nostoc punctiforme (strain ATCC 29133 / PCC 73102)).